Here is a 169-residue protein sequence, read N- to C-terminus: E1B protein, small T-antigen (169 aa).

This sequence belongs to the adenoviridae E1B 19 kDa protein family.

The chain is E1B protein, small T-antigen from Canis lupus familiaris (Dog).